Here is a 136-residue protein sequence, read N- to C-terminus: Small ribosomal subunit protein uS9 (136 aa).

Residues 95–136 are disordered; the sequence is GLSPDNRKPLKTEGHLSRDPRSKERKKYGLKKARKAGQFSKR. A compositionally biased stretch (basic and acidic residues) spans 99–116; sequence DNRKPLKTEGHLSRDPRS. The segment covering 117 to 136 has biased composition (basic residues); that stretch reads KERKKYGLKKARKAGQFSKR.

It belongs to the universal ribosomal protein uS9 family.

This chain is Small ribosomal subunit protein uS9, found in Prochlorococcus marinus subsp. pastoris (strain CCMP1986 / NIES-2087 / MED4).